Consider the following 1134-residue polypeptide: Protocadherin-18 (1134 aa).

The N-terminal stretch at 1 to 27 (MYQMNAKMHFTFVFALLVVSFNLDVLG) is a signal peptide. 6 consecutive Cadherin domains span residues 28-137 (KNLK…SPQF), 138-246 (SRSL…SPAF), 247-354 (EQQS…KPEI), 361-465 (PGKE…PPHF), 466-576 (QRSR…VPVV), and 582-697 (RNNT…APLD). Over 28 to 699 (KNLKYRIYEE…SVSQAPLDVS (672 aa)) the chain is Extracellular. A glycan (N-linked (GlcNAc...) asparagine) is linked at Asn103. Asn269 carries N-linked (GlcNAc...) asparagine glycosylation. Asn559 carries an N-linked (GlcNAc...) asparagine glycan. Residues 700–720 (MIIIISLGAICAVLLVIMVLF) form a helical membrane-spanning segment. Over 721 to 1134 (ATRCNREKKD…NKLLQDVRQS (414 aa)) the chain is Cytoplasmic. Disordered stretches follow at residues 768–800 (TLPIRSHHRSSPSSSPTLERGQMGSRQSHNSHQ), 868–888 (SLKDSGRGDSEAGDSDYDLGR), and 941–1003 (DYRS…TSSL). Polar residues predominate over residues 791–800 (GSRQSHNSHQ). A compositionally biased stretch (basic and acidic residues) spans 868–877 (SLKDSGRGDS). The interval 892 to 1134 (IDRLLGEGFS…NKLLQDVRQS (243 aa)) is interaction with DAB1.

In terms of assembly, interacts with DAB1.

It is found in the cell membrane. Its function is as follows. Potential calcium-dependent cell-adhesion protein. The polypeptide is Protocadherin-18 (PCDH18) (Bos taurus (Bovine)).